Here is a 72-residue protein sequence, read N- to C-terminus: PAMP-induced secreted peptide 1 (72 aa).

The N-terminal stretch at 1 to 30 is a signal peptide; the sequence is MRRVSWSTVLIVVVMVSLFFVEHVVVPAAA. 4-hydroxyproline is present on residues Pro-65 and Pro-67.

Post-translationally, contains 4-hydroxyproline; hydroxylated on Pro-65 and Pro-67. In terms of tissue distribution, expressed in guard cells, hydathodes, leaf trichomes, and vascular tissues of leaves and roots.

Its subcellular location is the secreted. It localises to the extracellular space. It is found in the apoplast. Endogenous secreted peptide that acts as elicitor of immune response and positive regulator of defense response. Amplifies the immune response triggered by flg22, the active epitope of bacterial flagellin. Acts as a negative regulator of root growth. The polypeptide is PAMP-induced secreted peptide 1 (Arabidopsis thaliana (Mouse-ear cress)).